The primary structure comprises 293 residues: 4-hydroxy-tetrahydrodipicolinate synthase (293 aa).

Residue threonine 47 coordinates pyruvate. Residue tyrosine 135 is the Proton donor/acceptor of the active site. Catalysis depends on lysine 164, which acts as the Schiff-base intermediate with substrate. Residue isoleucine 205 coordinates pyruvate.

The protein belongs to the DapA family. Homotetramer; dimer of dimers.

The protein resides in the cytoplasm. The catalysed reaction is L-aspartate 4-semialdehyde + pyruvate = (2S,4S)-4-hydroxy-2,3,4,5-tetrahydrodipicolinate + H2O + H(+). It functions in the pathway amino-acid biosynthesis; L-lysine biosynthesis via DAP pathway; (S)-tetrahydrodipicolinate from L-aspartate: step 3/4. Its function is as follows. Catalyzes the condensation of (S)-aspartate-beta-semialdehyde [(S)-ASA] and pyruvate to 4-hydroxy-tetrahydrodipicolinate (HTPA). This chain is 4-hydroxy-tetrahydrodipicolinate synthase, found in Symbiobacterium thermophilum (strain DSM 24528 / JCM 14929 / IAM 14863 / T).